We begin with the raw amino-acid sequence, 163 residues long: Nucleotide-binding protein PC1_1036 (163 aa).

The protein belongs to the YajQ family.

Functionally, nucleotide-binding protein. The protein is Nucleotide-binding protein PC1_1036 of Pectobacterium carotovorum subsp. carotovorum (strain PC1).